We begin with the raw amino-acid sequence, 240 residues long: DNA repair protein RecO (240 aa).

Belongs to the RecO family.

Functionally, involved in DNA repair and RecF pathway recombination. This chain is DNA repair protein RecO, found in Actinobacillus pleuropneumoniae serotype 5b (strain L20).